A 188-amino-acid chain; its full sequence is Killer cell lectin-like receptor subfamily G member 1 (188 aa).

Topologically, residues 1-33 (MADSSIYSTLELPEAPQVQDESRWKLKAVLHRP) are cytoplasmic. The ITIM motif motif lies at 5 to 10 (SIYSTL). Residues 34–56 (HLSRFAMVALGLLTVILMSLLMY) form a helical; Signal-anchor for type II membrane protein membrane-spanning segment. Residues 57–188 (QRILCCGSKD…LQWICKKVLY (132 aa)) lie on the Extracellular side of the membrane. A disulfide bridge connects residues Cys75 and Cys86. Asn82 and Asn97 each carry an N-linked (GlcNAc...) asparagine glycan. In terms of domain architecture, C-type lectin spans 82 to 184 (NGSHCYYFSM…CEVALQWICK (103 aa)). 2 disulfides stabilise this stretch: Cys103-Cys183 and Cys162-Cys175.

Forms a monomer and homodimer; disulfide-linked. Interacts (via ITIM motif) with PTPN11 and INPP5D. Phosphorylated in response to monoclonal antibody G63 binding and antigenic stimulation. In terms of tissue distribution, expressed specifically on natural killer (NK) cells and activated CD8 T-cells. Not detected in spleen, thymus, lymph node, testis, brain or kidney. Not detected on mast cell lines, bone marrow-derived mast cells, or peritoneal mast cells.

The protein resides in the cell membrane. Functionally, plays an inhibitory role on natural killer (NK) cells and T-cell functions upon binding to their non-MHC ligands. May mediate missing self recognition by binding to a highly conserved site on classical cadherins, enabling it to monitor expression of E-cadherin/CDH1, N-cadherin/CDH2 and R-cadherin/CDH4 on target cells. The sequence is that of Killer cell lectin-like receptor subfamily G member 1 (Klrg1) from Mus musculus (Mouse).